A 298-amino-acid polypeptide reads, in one-letter code: Acetyl-coenzyme A carboxylase carboxyl transferase subunit beta (298 aa).

The tract at residues 1-21 is disordered; the sequence is MNQEVKSGKVLSPSTPWTQRP. The CoA carboxyltransferase N-terminal domain occupies 41 to 298; that stretch reads PTIECPECHA…RLVSKLMNLP (258 aa). The Zn(2+) site is built by Cys45, Cys48, Cys64, and Cys67. The C4-type zinc-finger motif lies at 45–67; that stretch reads CPECHALVTRTAISFNAYVCPQC.

Belongs to the AccD/PCCB family. As to quaternary structure, acetyl-CoA carboxylase is a heterohexamer composed of biotin carboxyl carrier protein (AccB), biotin carboxylase (AccC) and two subunits each of ACCase subunit alpha (AccA) and ACCase subunit beta (AccD). Zn(2+) serves as cofactor.

It is found in the cytoplasm. The catalysed reaction is N(6)-carboxybiotinyl-L-lysyl-[protein] + acetyl-CoA = N(6)-biotinyl-L-lysyl-[protein] + malonyl-CoA. It functions in the pathway lipid metabolism; malonyl-CoA biosynthesis; malonyl-CoA from acetyl-CoA: step 1/1. Component of the acetyl coenzyme A carboxylase (ACC) complex. Biotin carboxylase (BC) catalyzes the carboxylation of biotin on its carrier protein (BCCP) and then the CO(2) group is transferred by the transcarboxylase to acetyl-CoA to form malonyl-CoA. This chain is Acetyl-coenzyme A carboxylase carboxyl transferase subunit beta, found in Acinetobacter baumannii (strain AYE).